Consider the following 586-residue polypeptide: Asparagine synthetase [glutamine-hydrolyzing] (586 aa).

The For GATase activity role is filled by Cys2. Residues 2–185 (CGILAVLGCS…PGHLYSSKSG (184 aa)) enclose the Glutamine amidotransferase type-2 domain. Residues 50 to 54 (RLAII), 75 to 77 (NGE), and Asp98 each bind L-glutamine. Positions 194 to 517 (PPWFNESVPS…PQNSARLTVP (324 aa)) constitute an Asparagine synthetase domain. ATP-binding positions include Leu232, Val268, and 342–343 (SG).

It belongs to the asparagine synthetase family.

The catalysed reaction is L-aspartate + L-glutamine + ATP + H2O = L-asparagine + L-glutamate + AMP + diphosphate + H(+). It functions in the pathway amino-acid biosynthesis; L-asparagine biosynthesis; L-asparagine from L-aspartate (L-Gln route): step 1/1. This chain is Asparagine synthetase [glutamine-hydrolyzing], found in Brassica oleracea (Wild cabbage).